The sequence spans 454 residues: MDTDTSISEDLKLAVLEKIKPTEAERKELMAVQDELAAEVKAAAEKLCVSDIFVKMVGSAARGTWLSGTHDIDVFISFPEETSRKDLEIRGMGIAREVAKHAEYAEDRHAEHPYLNIVYKGFDVDLVPCFRVCSACQLKSAVDRTPFHNEFIKSRIKGREDDVLLMKQFMRGGRVYGSELKTQGFSGYLTELLIIYYGSFEKTVKAASSWKPGKKIDIMQHSELEHSEPLVMVDPTDPKRNVAAALSLDKFCMFIDHCREFLKSPEIKFFFPESPLPIEDKEFLEKLESRKTSQLAIVFETPDVVDDVLYPQLYKMEQAASSLLSEYDFSVIKTGVWSGKPQTVVMLELISGTLPNVKKRTGPPVWVREHAEKFKDKYEGAENVFGGYIENGKYVYEVHRKYTTAKGLLEEQLLNCSLGKQVYQSVNKGFEVIENAEICRLKDQDFRVFLRKWV.

2 residues coordinate ATP: serine 59 and arginine 62. Positions 59 and 62 each coordinate CTP. Positions 71, 73, and 125 each coordinate Mg(2+). Positions 148, 167, and 176 each coordinate ATP. Histidine 148, lysine 167, and tyrosine 176 together coordinate CTP.

Belongs to the tRNA nucleotidyltransferase/poly(A) polymerase family. Archaeal CCA-adding enzyme subfamily. Homodimer. Mg(2+) serves as cofactor.

It catalyses the reaction a tRNA precursor + 2 CTP + ATP = a tRNA with a 3' CCA end + 3 diphosphate. The enzyme catalyses a tRNA with a 3' CCA end + 2 CTP + ATP = a tRNA with a 3' CCACCA end + 3 diphosphate. Catalyzes the addition and repair of the essential 3'-terminal CCA sequence in tRNAs without using a nucleic acid template. Adds these three nucleotides in the order of C, C, and A to the tRNA nucleotide-73, using CTP and ATP as substrates and producing inorganic pyrophosphate. tRNA 3'-terminal CCA addition is required both for tRNA processing and repair. Also involved in tRNA surveillance by mediating tandem CCA addition to generate a CCACCA at the 3' terminus of unstable tRNAs. While stable tRNAs receive only 3'-terminal CCA, unstable tRNAs are marked with CCACCA and rapidly degraded. The polypeptide is CCA-adding enzyme (Methanosarcina mazei (strain ATCC BAA-159 / DSM 3647 / Goe1 / Go1 / JCM 11833 / OCM 88) (Methanosarcina frisia)).